A 332-amino-acid polypeptide reads, in one-letter code: tRNA (cytosine(38)-C(5))-methyltransferase (332 aa).

The 330-residue stretch at 3 to 332 (HKILELYSGI…ISELLKILFE (330 aa)) folds into the SAM-dependent MTase C5-type domain. S-adenosyl-L-homocysteine contacts are provided by residues 12–14 (IGG), 33–34 (DI), 55–56 (NI), and Ser75. Cys78 is an active-site residue. S-adenosyl-L-homocysteine is bound by residues Gln79, Ser97, and 316-317 (NS).

The protein belongs to the class I-like SAM-binding methyltransferase superfamily. C5-methyltransferase family.

Its subcellular location is the cytoplasm. The protein localises to the nucleus. The catalysed reaction is cytidine(38) in tRNA + S-adenosyl-L-methionine = 5-methylcytidine(38) in tRNA + S-adenosyl-L-homocysteine + H(+). The enzyme catalyses a 2'-deoxycytidine in DNA + S-adenosyl-L-methionine = a 5-methyl-2'-deoxycytidine in DNA + S-adenosyl-L-homocysteine + H(+). Its function is as follows. Specifically methylates cytosine 38 in the anticodon loop of tRNA(Asp). Also has DNA (cytosine-5)-methyltransferase activity. Shows affinity for both tRNA(Asp) and DNA substrates. The protein is tRNA (cytosine(38)-C(5))-methyltransferase of Spodoptera frugiperda (Fall armyworm).